The chain runs to 493 residues: MAKELKELTPRSESYSQWYQDLVIKADLAENSAVRGCMVIKPYGYAIWEKMQRQLDDMFKETGHVNAYFPLFIPKSFLSREAEHVEGFAKECAVVTHYRLKANPDGDGVVVDPQAKLEEELIVRPTSETIIWNTYKNWIQSHRDLPILCNQWANVVRWEMRTRLFLRTAEFLWQEGHTAHATKEEAEEEARRMLEVYATFAEEYMAMPVVKGVKSANERFAGAVDTYTIEALMQDGKALQSGTSHFLGQNFAKAFNVTFADKDGNRDFVWATSWGVSTRLMGALIMSHSDDNGLVLPPKLAPYQVVIIPIYRNEEQLAQIDEKATQITQALRAKGISVKYDNSDNKKPGWKFAEYELKGIPVRLAMGARDLENNTIEIARRDTLTKETVGLDGIEETVATLLDDIQKNIFQKALNYRKEHTITVDSYEEFKEKIEDGGFILAHWDGTSETEERIKAETKATIRCIPLNGDMTPGKCMVTGKPSPQRVLFARAY.

Belongs to the class-II aminoacyl-tRNA synthetase family. ProS type 3 subfamily. In terms of assembly, homodimer.

The protein localises to the cytoplasm. The catalysed reaction is tRNA(Pro) + L-proline + ATP = L-prolyl-tRNA(Pro) + AMP + diphosphate. In terms of biological role, catalyzes the attachment of proline to tRNA(Pro) in a two-step reaction: proline is first activated by ATP to form Pro-AMP and then transferred to the acceptor end of tRNA(Pro). The chain is Proline--tRNA ligase from Porphyromonas gingivalis (strain ATCC BAA-308 / W83).